Here is a 304-residue protein sequence, read N- to C-terminus: 2-phospho-L-lactate transferase (304 aa).

Asp-49 is a 7,8-didemethyl-8-hydroxy-5-deazariboflavin binding site.

This sequence belongs to the CofD family. In terms of assembly, homodimer. It depends on Mg(2+) as a cofactor.

It catalyses the reaction (2S)-lactyl-2-diphospho-5'-guanosine + 7,8-didemethyl-8-hydroxy-5-deazariboflavin = oxidized coenzyme F420-0 + GMP + H(+). Its pathway is cofactor biosynthesis; coenzyme F420 biosynthesis. Its function is as follows. Catalyzes the transfer of the 2-phospholactate moiety from (2S)-lactyl-2-diphospho-5'-guanosine to 7,8-didemethyl-8-hydroxy-5-deazariboflavin (FO) with the formation of oxidized coenzyme F420-0 and GMP. The protein is 2-phospho-L-lactate transferase of Methanocorpusculum labreanum (strain ATCC 43576 / DSM 4855 / Z).